The following is a 636-amino-acid chain: MLSTRTAAVAASASPASPWKLGGRSEGGASCDGCRTYRNTLRRRAAPAKVRALPPRRVDAVAMVSNAETETEKEQEEAAAASEELPVMPWATSVASGYTLLRDPHHNKGLAFTEEERDGHYLRGLLPPAVLSQELQIKKFMNTLRQYQTPLQRYIAMMNLQETDERLFYKLLIDNVVELLPFVYTPTVGEACQKYGSIFGRPQGLYVSLKDKGKVLEVLRNWPHRNIQVICVTDGERILGLGDLGCQGMGIPVGKLALYTALGGVDPSVCLPITIDVGTNNEFLLNDEFYIGLRQKRATGEEYDELIEEFMSAVKQFYGEKVLIQFEDFANHNAFDLLEKYSKSHLVFNDDIQGTASVVLAGLLAALKMVGGTLAEQTYLFLGAGEAGTGIAELIALEISKQTNAPIEECRKKVWLVDSKGLIVDSRKGSLQPFKKPWAHEHEPLKTLYDAVQSIKPTVLIGTSGVGRTFTKEIIEAMSSFNERPIIFSLSNPTSHSECTAEQAYTWSQGRSIFASGSPFAPVEYEGKTFVPGQSNNAYIFPGLGLGLVISGAVRVHEDMLLAASKALADQATQDNFEKGSIFPPFTSIRKISAHIAAAVAGKAYELGLATRLPPPSDLVKYAENCMYTPVYRNYR.

The disordered stretch occupies residues 1–28 (MLSTRTAAVAASASPASPWKLGGRSEGG). The transit peptide at 1–62 (MLSTRTAAVA…LPPRRVDAVA (62 aa)) directs the protein to the chloroplast. The segment covering 7 to 18 (AAVAASASPASP) has biased composition (low complexity). The active-site Proton donor is the tyrosine 184. Arginine 237 is a binding site for NAD(+). Residue lysine 255 is the Proton acceptor of the active site. Residues glutamate 327, aspartate 328, and aspartate 351 each coordinate a divalent metal cation. Aspartate 351 is a binding site for NAD(+). 380 to 396 (LFLGAGEAGTGIAELIA) contacts NADP(+). Residue asparagine 492 participates in NAD(+) binding.

It belongs to the malic enzymes family. As to quaternary structure, homotetramer. Requires Mg(2+) as cofactor. The cofactor is Mn(2+).

Its subcellular location is the plastid. It localises to the chloroplast. It catalyses the reaction (S)-malate + NADP(+) = pyruvate + CO2 + NADPH. The catalysed reaction is oxaloacetate + H(+) = pyruvate + CO2. Its pathway is photosynthesis; C4 acid pathway. Its function is as follows. The chloroplastic ME isoform decarboxylates malate shuttled from neighboring mesophyll cells. The CO(2) released is then refixed by ribulose-bisphosphate carboxylase. This pathway eliminates the photorespiratory loss of CO(2) that occurs in most plants. In Zea mays (Maize), this protein is NADP-dependent malic enzyme, chloroplastic (MOD1).